The primary structure comprises 284 residues: MYKRCIGFIKLMRVHQPVGFFLLLWPTLWALWITNRGIPDFIVLSLFIVGVMCMRSAGCVINDYIDYDIDMCVQRTIRRPIVIGSVKKQEALWVFFILILIALIVVCVFNNIIAVFLSLIVLGLSIIYPYLKRYIYLPQLVLGIIFSWSILIVYTVMNCAVNKTTWLLFLANTIWVVLYDTEYAMVDRDDDKCIGIKSSALLFGKIDKIVIGILQLLTVFILYIIGIVEQLPIIFYLFSIVGASILFIWQQVLIFNRNREKCLWAFLSNSYVGMLIFVGIVLSF.

8 consecutive transmembrane segments (helical) span residues 14 to 34 (VHQP…LWIT), 41 to 61 (FIVL…GCVI), 93 to 113 (WVFF…NNII), 134 to 154 (YIYL…LIVY), 166 to 186 (WLLF…YAMV), 209 to 229 (IVIG…GIVE), 233 to 253 (IIFY…QQVL), and 262 to 282 (CLWA…GIVL).

The protein belongs to the UbiA prenyltransferase family. It depends on Mg(2+) as a cofactor.

The protein localises to the cell inner membrane. The enzyme catalyses all-trans-octaprenyl diphosphate + 4-hydroxybenzoate = 4-hydroxy-3-(all-trans-octaprenyl)benzoate + diphosphate. It functions in the pathway cofactor biosynthesis; ubiquinone biosynthesis. In terms of biological role, catalyzes the prenylation of para-hydroxybenzoate (PHB) with an all-trans polyprenyl group. Mediates the second step in the final reaction sequence of ubiquinone-8 (UQ-8) biosynthesis, which is the condensation of the polyisoprenoid side chain with PHB, generating the first membrane-bound Q intermediate 3-octaprenyl-4-hydroxybenzoate. This is 4-hydroxybenzoate octaprenyltransferase from Blochmanniella floridana.